The following is a 163-amino-acid chain: NADH-quinone oxidoreductase subunit I (163 aa).

4Fe-4S ferredoxin-type domains are found at residues 53–83 and 94–123; these read LRRYPNGEERCIACKLCEAICPAQAITIEAG and VRYDIDMVKCIYCGFCQEACPVDAIVEGPN. [4Fe-4S] cluster is bound by residues cysteine 63, cysteine 66, cysteine 69, cysteine 73, cysteine 103, cysteine 106, cysteine 109, and cysteine 113.

Belongs to the complex I 23 kDa subunit family. NDH-1 is composed of 14 different subunits. Subunits NuoA, H, J, K, L, M, N constitute the membrane sector of the complex. [4Fe-4S] cluster is required as a cofactor.

Its subcellular location is the cell inner membrane. It catalyses the reaction a quinone + NADH + 5 H(+)(in) = a quinol + NAD(+) + 4 H(+)(out). Its function is as follows. NDH-1 shuttles electrons from NADH, via FMN and iron-sulfur (Fe-S) centers, to quinones in the respiratory chain. The immediate electron acceptor for the enzyme in this species is believed to be ubiquinone. Couples the redox reaction to proton translocation (for every two electrons transferred, four hydrogen ions are translocated across the cytoplasmic membrane), and thus conserves the redox energy in a proton gradient. This Brucella abortus (strain S19) protein is NADH-quinone oxidoreductase subunit I.